The primary structure comprises 383 residues: 1-deoxy-D-xylulose 5-phosphate reductoisomerase (383 aa).

Residues T10, G11, S12, I13, N38, and N121 each coordinate NADPH. K122 serves as a coordination point for 1-deoxy-D-xylulose 5-phosphate. Residue E123 coordinates NADPH. D147 contributes to the Mn(2+) binding site. 4 residues coordinate 1-deoxy-D-xylulose 5-phosphate: S148, E149, S172, and H195. E149 contributes to the Mn(2+) binding site. Position 201 (G201) interacts with NADPH. S208, N213, K214, and E217 together coordinate 1-deoxy-D-xylulose 5-phosphate. Position 217 (E217) interacts with Mn(2+).

It belongs to the DXR family. Mg(2+) serves as cofactor. Requires Mn(2+) as cofactor.

The catalysed reaction is 2-C-methyl-D-erythritol 4-phosphate + NADP(+) = 1-deoxy-D-xylulose 5-phosphate + NADPH + H(+). Its pathway is isoprenoid biosynthesis; isopentenyl diphosphate biosynthesis via DXP pathway; isopentenyl diphosphate from 1-deoxy-D-xylulose 5-phosphate: step 1/6. In terms of biological role, catalyzes the NADPH-dependent rearrangement and reduction of 1-deoxy-D-xylulose-5-phosphate (DXP) to 2-C-methyl-D-erythritol 4-phosphate (MEP). The protein is 1-deoxy-D-xylulose 5-phosphate reductoisomerase of Vesicomyosocius okutanii subsp. Calyptogena okutanii (strain HA).